The sequence spans 492 residues: Cobyric acid synthase (492 aa).

The GATase cobBQ-type domain occupies 259 to 453 (HTTVAVVAYP…LHGLFEDAVA (195 aa)). Cys-340 functions as the Nucleophile in the catalytic mechanism. His-445 is a catalytic residue.

The protein belongs to the CobB/CobQ family. CobQ subfamily.

Its pathway is cofactor biosynthesis; adenosylcobalamin biosynthesis. Its function is as follows. Catalyzes amidations at positions B, D, E, and G on adenosylcobyrinic A,C-diamide. NH(2) groups are provided by glutamine, and one molecule of ATP is hydrogenolyzed for each amidation. The polypeptide is Cobyric acid synthase (Paracidovorax citrulli (strain AAC00-1) (Acidovorax citrulli)).